The sequence spans 795 residues: Protocadherin beta-5 (795 aa).

The first 30 residues, 1–30 (METALAKTPQKRQVMFLAILLLLWEAGSEA), serve as a signal peptide directing secretion. Residues 31-689 (VRYSIPEETE…AQADSLTVYL (659 aa)) lie on the Extracellular side of the membrane. 5 consecutive Cadherin domains span residues 35–133 (IPEE…APEF), 138–242 (MLLK…APEF), 247–346 (YEVQ…APEL), 351–450 (LSSP…APAF), and 455–560 (YTLF…SPFV). Residue asparagine 169 is glycosylated (N-linked (GlcNAc...) asparagine). The residue at position 296 (lysine 296) is an N6-acetyllysine. Residues asparagine 417 and asparagine 435 are each glycosylated (N-linked (GlcNAc...) asparagine). An N-linked (GlcNAc...) asparagine glycan is attached at asparagine 566. A Cadherin 6 domain is found at 567-670 (GSAPCTELVP…LVDGFSQPYL (104 aa)). A helical membrane pass occupies residues 690–710 (VVALASVSSLFLFSVLLFVAV). Residues 711–795 (RLCRRSRAAP…AAFRNSFGLN (85 aa)) are Cytoplasmic-facing.

It localises to the cell membrane. Its function is as follows. Potential calcium-dependent cell-adhesion protein. May be involved in the establishment and maintenance of specific neuronal connections in the brain. The sequence is that of Protocadherin beta-5 (PCDHB5) from Homo sapiens (Human).